A 181-amino-acid chain; its full sequence is Der GTPase-activating protein YihI (181 aa).

Disordered stretches follow at residues 1 to 75 (MSRK…KKIP) and 145 to 181 (EPEAEEEFEDEAPVRKSRSDDDLLADFEDFDMDDYKG). The span at 32–43 (RLRKKDKKRKGL) shows a compositional bias: basic residues. A compositionally biased stretch (acidic residues) spans 146 to 155 (PEAEEEFEDE). The segment covering 156–165 (APVRKSRSDD) has biased composition (basic and acidic residues). The segment covering 166–181 (DLLADFEDFDMDDYKG) has biased composition (acidic residues).

Belongs to the YihI family. Interacts with Der.

A GTPase-activating protein (GAP) that modifies Der/EngA GTPase function. May play a role in ribosome biogenesis. The polypeptide is Der GTPase-activating protein YihI (Vibrio vulnificus (strain YJ016)).